A 984-amino-acid polypeptide reads, in one-letter code: Putative formate dehydrogenase SH0748 (984 aa).

One can recognise a 2Fe-2S ferredoxin-type domain in the interval 3–79 (EHLIVTLDGT…PMTVNTQNND (77 aa)). Positions 37, 48, 51, and 63 each coordinate [2Fe-2S] cluster. The 4Fe-4S His(Cys)3-ligated-type domain occupies 79-119 (DVKASQKEALDRILEKHMLYCTVCDYNNGDCEIHNAMDAWG). [4Fe-4S] cluster-binding residues include histidine 95, cysteine 99, cysteine 102, cysteine 109, cysteine 147, cysteine 150, cysteine 153, cysteine 157, cysteine 190, cysteine 193, cysteine 196, cysteine 200, cysteine 264, cysteine 267, cysteine 271, and cysteine 299. 4Fe-4S ferredoxin-type domains are found at residues 138 to 165 (PFYR…VNET) and 181 to 211 (NDVP…VNME). Residues 252-984 (MRKERIKKTK…YVFPGNVVDK (733 aa)) are formate dehydrogenase. In terms of domain architecture, 4Fe-4S Mo/W bis-MGD-type spans 257–313 (IKKTKTVCTYCGVGCSFDVWTKDREVLKVQPSHDSPANKIATCVKGKFSWGHINSDQ).

The protein in the C-terminal section; belongs to the prokaryotic molybdopterin-containing oxidoreductase family. [2Fe-2S] cluster is required as a cofactor. The cofactor is [4Fe-4S] cluster. It depends on Mo-bis(molybdopterin guanine dinucleotide) as a cofactor.

The enzyme catalyses formate + NAD(+) = CO2 + NADH. In Staphylococcus haemolyticus (strain JCSC1435), this protein is Putative formate dehydrogenase SH0748.